Reading from the N-terminus, the 505-residue chain is Cytochrome P450 monooxygenase efuB (505 aa).

Residues 12-34 (GFWPTVAGTVATYLFYQIVATVY) traverse the membrane as a helical segment. Cysteine 450 is a binding site for heme.

It belongs to the cytochrome P450 family. The cofactor is heme.

It is found in the membrane. Its pathway is secondary metabolite biosynthesis; terpenoid biosynthesis. In terms of biological role, cytochrome P450 monooxygenase; part of the gene cluster that mediates the biosynthesis of enfumafungin, a glycosylated fernene-type triterpenoid with potent antifungal activity, mediated by its interaction with beta-1,3-glucan synthase and the fungal cell wall. The pathway begins with the terpene cyclase-glycosyl transferase fusion protein that most likely uses 2,3-oxidosqualene as substrate and catalyzes glycosylation immediately after cyclization. The fernene glycoside then could be processed by the desaturase efuI which catalyzes isomerization of a double bond established by efuA to form the core structure. The latter would then undergo a series of hydroxylations in unknown order at C-2, C-19, C-23 and C-25, which would be catalyzed by two of the three cytochrome P450 monooxygenases efuB, efuG or efuH. The hydroxy-group at C-25 becomes oxidized by the dehydrogenase efuE to enable a spontaneous, non-enzymatic hemiacetal formation with C-23. After hydroxylation at C-2, acetylation by the acetyltransferase efuC takes place. The final steps in enfumafungin biosynthesis require expansion of the 5-membered ring by lactonization via a Baeyer-Villiger reaction mediated by one of the BGC's cytochrome P450 monooxygenases (efuB, efuG or efuH) followed by ring cleavage. This type of reaction would establish a double bond between C-20 and C-21 which could be reduced by the reductase efuL to form the final product. This is Cytochrome P450 monooxygenase efuB from Hormonema carpetanum.